The primary structure comprises 358 residues: MIGKINKFNFKSLLVLNTFALIATSYLFNNFIFIGVFILFFFLSLFATKNGLEIIRKLNLLQNIRTEGPSNHFQKSNTPTMGGVFLMIPFFILLLIITINLSSLKLFLLLLTIFGFYITGFLDDYLSIKNKENTGLKTKEKFILQSVISIIFILLAYEKNLINPLVILSDSWVINMNIFILPISFLVLVGISNSVNLTDGLDGLAAGCSGIVFYGLGTEILMKEQQELFVFSILCFSMSGLCLGFLKYNSYPAKIFMGDTGSLSIGATLGTIALLTNSVFTLSIFSGIFIIESLSVIIQVGVFKITKKLFHRGKRIFLMAPLHHHFELKGVKEQKIVENFWKINILLIILGIVLKIKL.

10 consecutive transmembrane segments (helical) span residues 27-47 (LFNN…SLFA), 81-101 (MGGV…TINL), 106-126 (LFLL…DDYL), 147-167 (VISI…PLVI), 171-191 (SWVI…LVGI), 201-221 (LDGL…TEIL), 228-248 (LFVF…FLKY), 255-275 (IFMG…IALL), 278-298 (SVFT…SVII), and 336-356 (IVEN…VLKI).

Belongs to the glycosyltransferase 4 family. MraY subfamily. Mg(2+) serves as cofactor.

It localises to the cell inner membrane. The catalysed reaction is UDP-N-acetyl-alpha-D-muramoyl-L-alanyl-gamma-D-glutamyl-meso-2,6-diaminopimeloyl-D-alanyl-D-alanine + di-trans,octa-cis-undecaprenyl phosphate = di-trans,octa-cis-undecaprenyl diphospho-N-acetyl-alpha-D-muramoyl-L-alanyl-D-glutamyl-meso-2,6-diaminopimeloyl-D-alanyl-D-alanine + UMP. The protein operates within cell wall biogenesis; peptidoglycan biosynthesis. Catalyzes the initial step of the lipid cycle reactions in the biosynthesis of the cell wall peptidoglycan: transfers peptidoglycan precursor phospho-MurNAc-pentapeptide from UDP-MurNAc-pentapeptide onto the lipid carrier undecaprenyl phosphate, yielding undecaprenyl-pyrophosphoryl-MurNAc-pentapeptide, known as lipid I. This chain is Phospho-N-acetylmuramoyl-pentapeptide-transferase, found in Prochlorococcus marinus (strain MIT 9215).